We begin with the raw amino-acid sequence, 251 residues long: MSGHSKWATTKHQKAVKDARRGKEFAKLIKNIEVAARTGGGDPAGNPTLYDAIQKAKKTSVPNDNIERARKRGAGEEAGGADWQTIMYEGYGPNGVAVLIECLSDNRNRAAGEVRVAMTRNGGSMADPGSVSYLFSRKGVVTLEKNSLSEDDVLTAVLEAGAEEVNDLGETFEVISEPTDLVAVRQALQEAGIDYESAEASFQPSMSVPVDVETARKVFKLVDALEDSDDVQNVYTNVDLSDEVLAALDED.

The disordered stretch occupies residues 1–20; sequence MSGHSKWATTKHQKAVKDAR.

Belongs to the TACO1 family.

The protein localises to the cytoplasm. This chain is Probable transcriptional regulatory protein MAB_2888c, found in Mycobacteroides abscessus (strain ATCC 19977 / DSM 44196 / CCUG 20993 / CIP 104536 / JCM 13569 / NCTC 13031 / TMC 1543 / L948) (Mycobacterium abscessus).